A 203-amino-acid polypeptide reads, in one-letter code: Outer-membrane lipoprotein carrier protein (203 aa).

An N-terminal signal peptide occupies residues 1-21 (MKKLAITCALLSGMVVSQVWA). Residues 184-203 (DASKFTFTPPKGVTVDDQRK) are disordered.

It belongs to the LolA family. As to quaternary structure, monomer.

It localises to the periplasm. Functionally, participates in the translocation of lipoproteins from the inner membrane to the outer membrane. Only forms a complex with a lipoprotein if the residue after the N-terminal Cys is not an aspartate (The Asp acts as a targeting signal to indicate that the lipoprotein should stay in the inner membrane). The polypeptide is Outer-membrane lipoprotein carrier protein (Klebsiella pneumoniae (strain 342)).